The sequence spans 74 residues: Conotoxin Vc6.11 (74 aa).

The signal sequence occupies residues 1 to 19 (MEKLTILLLVAAVLMSTQA). Positions 20–41 (LIQEQRQKAKINLFSKRKPSAE) are excised as a propeptide. 2 cysteine pairs are disulfide-bonded: Cys55-Cys66 and Cys61-Cys71.

This sequence belongs to the conotoxin O2 superfamily. Expressed by the venom duct.

The protein localises to the secreted. Its function is as follows. Inhibits voltage-gated ion channels. The protein is Conotoxin Vc6.11 of Conus victoriae (Queen Victoria cone).